We begin with the raw amino-acid sequence, 205 residues long: Small ribosomal subunit protein uS4 (205 aa).

The segment at 1–46 (MSKRHSAKYKIDRRMGENLWGRPKSPVNQRSYGPGQHGQRRKQKVS) is disordered. Positions 94 to 154 (SRLDAIVYRA…EKSRNMALVL (61 aa)) constitute an S4 RNA-binding domain.

This sequence belongs to the universal ribosomal protein uS4 family. Part of the 30S ribosomal subunit. Contacts protein S5. The interaction surface between S4 and S5 is involved in control of translational fidelity.

Functionally, one of the primary rRNA binding proteins, it binds directly to 16S rRNA where it nucleates assembly of the body of the 30S subunit. With S5 and S12 plays an important role in translational accuracy. The polypeptide is Small ribosomal subunit protein uS4 (Caulobacter sp. (strain K31)).